A 142-amino-acid polypeptide reads, in one-letter code: Transcription antitermination protein NusB (142 aa).

Belongs to the NusB family.

Functionally, involved in transcription antitermination. Required for transcription of ribosomal RNA (rRNA) genes. Binds specifically to the boxA antiterminator sequence of the ribosomal RNA (rrn) operons. This Persephonella marina (strain DSM 14350 / EX-H1) protein is Transcription antitermination protein NusB.